Consider the following 271-residue polypeptide: Non-homologous end joining protein Ku (271 aa).

One can recognise a Ku domain in the interval 12–194; it reads KLSLVTCPVV…DQKPVPELLS (183 aa). Residues 225 to 249 are disordered; sequence EAKKTPPAKKTKAEEKTGKGSAESN.

This sequence belongs to the prokaryotic Ku family. Homodimer. Interacts with LigD.

With LigD forms a non-homologous end joining (NHEJ) DNA repair enzyme, which repairs dsDNA breaks with reduced fidelity. Binds linear dsDNA with 5'- and 3'- overhangs but not closed circular dsDNA nor ssDNA. Recruits and stimulates the ligase activity of LigD. In Methylocella silvestris (strain DSM 15510 / CIP 108128 / LMG 27833 / NCIMB 13906 / BL2), this protein is Non-homologous end joining protein Ku.